A 433-amino-acid chain; its full sequence is Adenylosuccinate synthetase (433 aa).

GTP-binding positions include 11–17 and 39–41; these read GDEGKGK and GHT. Catalysis depends on Asp-12, which acts as the Proton acceptor. Residues Asp-12 and Gly-39 each coordinate Mg(2+). IMP contacts are provided by residues 12–15, 37–40, Thr-134, Arg-148, Asn-230, Thr-245, and Arg-309; these read DEGK and NAGH. His-40 functions as the Proton donor in the catalytic mechanism. 305–311 provides a ligand contact to substrate; it reads VTTGRKR. GTP is bound by residues Arg-311, 337–339, and 419–421; these read KLD and GTG.

Belongs to the adenylosuccinate synthetase family. Homodimer. It depends on Mg(2+) as a cofactor.

It is found in the cytoplasm. The catalysed reaction is IMP + L-aspartate + GTP = N(6)-(1,2-dicarboxyethyl)-AMP + GDP + phosphate + 2 H(+). It participates in purine metabolism; AMP biosynthesis via de novo pathway; AMP from IMP: step 1/2. In terms of biological role, plays an important role in the de novo pathway and in the salvage pathway of purine nucleotide biosynthesis. Catalyzes the first committed step in the biosynthesis of AMP from IMP. This chain is Adenylosuccinate synthetase, found in Saccharomyces cerevisiae (strain YJM789) (Baker's yeast).